Here is a 598-residue protein sequence, read N- to C-terminus: Probable translation initiation factor IF-2 (598 aa).

The 223-residue stretch at leucine 3 to lysine 225 folds into the tr-type G domain. The interval glycine 12–threonine 19 is G1. Residue glycine 12–threonine 19 participates in GTP binding. A G2 region spans residues glycine 37–histidine 41. A G3 region spans residues aspartate 76–glycine 79. GTP contacts are provided by residues aspartate 76 to histidine 80 and asparagine 130 to aspartate 133. The segment at asparagine 130–aspartate 133 is G4. The G5 stretch occupies residues serine 200–methionine 202.

This sequence belongs to the TRAFAC class translation factor GTPase superfamily. Classic translation factor GTPase family. IF-2 subfamily.

In terms of biological role, function in general translation initiation by promoting the binding of the formylmethionine-tRNA to ribosomes. Seems to function along with eIF-2. This is Probable translation initiation factor IF-2 from Methanococcus maripaludis (strain DSM 14266 / JCM 13030 / NBRC 101832 / S2 / LL).